We begin with the raw amino-acid sequence, 182 residues long: MIRAFLVVALASVAVFSAPIPEVPQNFDDIPAEYKGLIPAEVAEHLKAITAEEKAALKELAQNHKEYKTEEEFKAALKEKSPSLYEKAGKLEALLTAKFEKLDATAQALVKKIIAKGRELHQQYLAGDKPTLDSLKELAKGYIAEYKALSDDAKATITAEFPILTGFFQNEKIQAIVGQYVN.

The signal sequence occupies residues 1-17; the sequence is MIRAFLVVALASVAVFS. Coiled-coil stretches lie at residues 46–73 and 131–152; these read LKAI…EEEF and TLDS…LSDD.

This sequence belongs to the fatty-acid and retinol-binding protein (FARBP) family.

It localises to the secreted. In terms of biological role, probably binds lipids. This chain is Fatty-acid and retinol-binding protein 2 (far-2), found in Caenorhabditis elegans.